Here is a 194-residue protein sequence, read N- to C-terminus: Phosphoprotein p30 (194 aa).

Belongs to the asfivirus phosphoprotein p30 family. In terms of assembly, oligomer. Interacts with host HNRNPK. Post-translationally, phosphorylated on serine residues in the 115 N-terminal amino acids.

Its subcellular location is the host cytoplasm. It is found in the host nucleus. The protein resides in the virion. In terms of biological role, modifies the subcellular distribution of heterogeneous nuclear ribonucleoprotein K (HNRNPK) and may contribute to modulate HNRNPK functions related to processing and export of mRNAs during ASFV infection. Necessary for virus internalization. This Ornithodoros (relapsing fever ticks) protein is Phosphoprotein p30.